Reading from the N-terminus, the 169-residue chain is N5-carboxyaminoimidazole ribonucleotide mutase (169 aa).

3 residues coordinate substrate: Ser-16, Asp-19, and Arg-46.

Belongs to the AIR carboxylase family. Class I subfamily.

It catalyses the reaction 5-carboxyamino-1-(5-phospho-D-ribosyl)imidazole + H(+) = 5-amino-1-(5-phospho-D-ribosyl)imidazole-4-carboxylate. It participates in purine metabolism; IMP biosynthesis via de novo pathway; 5-amino-1-(5-phospho-D-ribosyl)imidazole-4-carboxylate from 5-amino-1-(5-phospho-D-ribosyl)imidazole (N5-CAIR route): step 2/2. Catalyzes the conversion of N5-carboxyaminoimidazole ribonucleotide (N5-CAIR) to 4-carboxy-5-aminoimidazole ribonucleotide (CAIR). The polypeptide is N5-carboxyaminoimidazole ribonucleotide mutase (Escherichia coli O157:H7).